The sequence spans 339 residues: Glycerol-3-phosphate dehydrogenase [NAD(P)+] (339 aa).

NADPH-binding residues include Ser-14, Tyr-15, His-35, and Lys-109. Positions 109, 138, and 140 each coordinate sn-glycerol 3-phosphate. Ala-142 serves as a coordination point for NADPH. Residues Lys-194, Asp-247, Ser-257, Arg-258, and Asn-259 each contribute to the sn-glycerol 3-phosphate site. Catalysis depends on Lys-194, which acts as the Proton acceptor. Arg-258 serves as a coordination point for NADPH. 2 residues coordinate NADPH: Val-282 and Glu-284.

Belongs to the NAD-dependent glycerol-3-phosphate dehydrogenase family.

It is found in the cytoplasm. The enzyme catalyses sn-glycerol 3-phosphate + NAD(+) = dihydroxyacetone phosphate + NADH + H(+). It carries out the reaction sn-glycerol 3-phosphate + NADP(+) = dihydroxyacetone phosphate + NADPH + H(+). It participates in membrane lipid metabolism; glycerophospholipid metabolism. In terms of biological role, catalyzes the reduction of the glycolytic intermediate dihydroxyacetone phosphate (DHAP) to sn-glycerol 3-phosphate (G3P), the key precursor for phospholipid synthesis. The chain is Glycerol-3-phosphate dehydrogenase [NAD(P)+] from Shewanella amazonensis (strain ATCC BAA-1098 / SB2B).